The following is a 103-amino-acid chain: Toxin BMLCL (103 aa).

Positions 1-21 (MKTLLLTLVVVTIICLDLGYT) are cleaved as a signal peptide. Cystine bridges form between Cys-24/Cys-45, Cys-27/Cys-37, Cys-38/Cys-72, Cys-76/Cys-90, and Cys-91/Cys-96.

It belongs to the three-finger toxin family. Ancestral subfamily. Orphan group XVII sub-subfamily. As to expression, expressed by the venom gland.

It localises to the secreted. Its function is as follows. Interacts with high efficiency with both neuronal alpha-7/CHRNA7 and muscle type nicotinic acetylcholine receptors (nAChRs). Tested on human alpha-7/CHRNA7 nAChR (IC(50)=42 nM), T.californica muscle receptor (IC(50)=31 nM), L.stagnalis and A.californica acetylcholine-binding proteins (IC(50)=333 nM and 3.4 uM, respectively). The sequence is that of Toxin BMLCL from Bungarus multicinctus (Many-banded krait).